The sequence spans 658 residues: Pentatricopeptide repeat-containing protein 7, mitochondrial (658 aa).

Residues 1–29 (MRNCVSPLLFAWTKHLRLREFKIPFPNRL) constitute a mitochondrion transit peptide. PPR repeat units lie at residues 130 to 164 (VKKRFAECFDKNPDLCLIVYSKLEVETLAKITPIW) and 220 to 254 (LYVELCLVYHFHNSHLGMDSSTVSNLKRFCFSESL).

Its subcellular location is the mitochondrion. Mitochondrial RNA-binding protein required for the stability of the atp6 mRNA. The protein is Pentatricopeptide repeat-containing protein 7, mitochondrial (ppr7) of Schizosaccharomyces pombe (strain 972 / ATCC 24843) (Fission yeast).